We begin with the raw amino-acid sequence, 500 residues long: Prostacyclin synthase (500 aa).

A helical membrane pass occupies residues 1–20; it reads MSWAVVFGLLAALLLLLLLT. Residues Arg-106, Leu-112, Asn-287, 358-359, and Arg-382 contribute to the substrate site; that span reads TR. Cys-441 provides a ligand contact to heme.

Belongs to the cytochrome P450 family. The cofactor is heme.

Its subcellular location is the endoplasmic reticulum membrane. It catalyses the reaction prostaglandin H2 = prostaglandin I2. It carries out the reaction a hydroperoxyeicosatetraenoate = an oxoeicosatetraenoate + H2O. The catalysed reaction is (15S)-hydroperoxy-(5Z,8Z,11Z,13E)-eicosatetraenoate = 15-oxo-(5Z,8Z,11Z,13E)-eicosatetraenoate + H2O. The enzyme catalyses (15S)-hydroperoxy-(5Z,8Z,11Z,13E)-eicosatetraenoate + AH2 = (15S)-hydroxy-(5Z,8Z,11Z,13E)-eicosatetraenoate + A + H2O. In terms of biological role, catalyzes the biosynthesis and metabolism of eicosanoids. Catalyzes the isomerization of prostaglandin H2 to prostacyclin (= prostaglandin I2), a potent mediator of vasodilation and inhibitor of platelet aggregation. Additionally, displays dehydratase activity, toward hydroperoxyeicosatetraenoates (HPETEs), especially toward (15S)-hydroperoxy-(5Z,8Z,11Z,13E)-eicosatetraenoate (15(S)-HPETE). This Bos taurus (Bovine) protein is Prostacyclin synthase (PTGIS).